We begin with the raw amino-acid sequence, 111 residues long: Dynein light chain Tctex-type (111 aa).

The protein belongs to the dynein light chain Tctex-type family.

It is found in the cytoplasm. It localises to the cytoskeleton. Functionally, acts as a non-catalytic accessory component of a dynein complex. In Schizosaccharomyces pombe (strain 972 / ATCC 24843) (Fission yeast), this protein is Dynein light chain Tctex-type (dlc1).